The chain runs to 231 residues: Sugar fermentation stimulation protein homolog (231 aa).

The protein belongs to the SfsA family.

This chain is Sugar fermentation stimulation protein homolog, found in Pyrobaculum islandicum (strain DSM 4184 / JCM 9189 / GEO3).